A 241-amino-acid chain; its full sequence is Glucosamine-6-phosphate deaminase (241 aa).

The Proton acceptor; for enolization step role is filled by D67. N136 functions as the For ring-opening step in the catalytic mechanism. H138 serves as the catalytic Proton acceptor; for ring-opening step. Catalysis depends on E143, which acts as the For ring-opening step.

The protein belongs to the glucosamine/galactosamine-6-phosphate isomerase family. NagB subfamily.

It catalyses the reaction alpha-D-glucosamine 6-phosphate + H2O = beta-D-fructose 6-phosphate + NH4(+). It functions in the pathway amino-sugar metabolism; N-acetylneuraminate degradation; D-fructose 6-phosphate from N-acetylneuraminate: step 5/5. Catalyzes the reversible isomerization-deamination of glucosamine 6-phosphate (GlcN6P) to form fructose 6-phosphate (Fru6P) and ammonium ion. The chain is Glucosamine-6-phosphate deaminase from Bacillus velezensis (strain DSM 23117 / BGSC 10A6 / LMG 26770 / FZB42) (Bacillus amyloliquefaciens subsp. plantarum).